The sequence spans 403 residues: MSVHIEESPTTDGDVITNYTINFGPQHPAAHGVLRMIMELDGEIIERVDPHVGLLHRGTEKLIEHKTYLQALPYFDRLDYCSPLCMEHSYVLAIEKLLNIEVPERAQYLRVLFAELTRISNHMLNLGAHVLDVGAFTPNLWMFELREDCMNFFERASGARMHMAWFRPGGVHQDVPEKLLVDIGEWLDTRLPELFGDAMSLVLDNRIFKQRNVDIAVVSKDDAVKWGFSGPMIRAAGIPWDLRKSQPYDVYDRMEFDIPVGTNSDCYDRFSVRVKEVYESAKIIKQCLAQMPQGPIASTDGKVSPPSRGRMKQSMEALIHHFKLYTEGFHVPAGEVYVATESPKGEFGVYLVADGTNKPYRCKIRPTAFSHLQAMDFMSKGHMLPDATAILGAIDVVFGECDR.

The protein belongs to the complex I 49 kDa subunit family. In terms of assembly, NDH-1 is composed of 14 different subunits. Subunits NuoB, C, D, E, F, and G constitute the peripheral sector of the complex.

It localises to the cell inner membrane. It catalyses the reaction a quinone + NADH + 5 H(+)(in) = a quinol + NAD(+) + 4 H(+)(out). NDH-1 shuttles electrons from NADH, via FMN and iron-sulfur (Fe-S) centers, to quinones in the respiratory chain. The immediate electron acceptor for the enzyme in this species is believed to be ubiquinone. Couples the redox reaction to proton translocation (for every two electrons transferred, four hydrogen ions are translocated across the cytoplasmic membrane), and thus conserves the redox energy in a proton gradient. This chain is NADH-quinone oxidoreductase subunit D, found in Erythrobacter litoralis (strain HTCC2594).